A 36-amino-acid chain; its full sequence is Photosystem II reaction center protein M (36 aa).

A helical transmembrane segment spans residues 5–25 (ILGLIATALFIIIPTSFLLIL).

It belongs to the PsbM family. In terms of assembly, PSII is composed of 1 copy each of membrane proteins PsbA, PsbB, PsbC, PsbD, PsbE, PsbF, PsbH, PsbI, PsbJ, PsbK, PsbL, PsbM, PsbT, PsbX, PsbY, PsbZ, Psb30/Ycf12, at least 3 peripheral proteins of the oxygen-evolving complex and a large number of cofactors. It forms dimeric complexes.

The protein localises to the plastid. It is found in the chloroplast thylakoid membrane. Its function is as follows. One of the components of the core complex of photosystem II (PSII). PSII is a light-driven water:plastoquinone oxidoreductase that uses light energy to abstract electrons from H(2)O, generating O(2) and a proton gradient subsequently used for ATP formation. It consists of a core antenna complex that captures photons, and an electron transfer chain that converts photonic excitation into a charge separation. This subunit is found at the monomer-monomer interface. The sequence is that of Photosystem II reaction center protein M from Chlorokybus atmophyticus (Soil alga).